Consider the following 146-residue polypeptide: UPF0178 protein CTC_02403 (146 aa).

The protein belongs to the UPF0178 family.

This chain is UPF0178 protein CTC_02403, found in Clostridium tetani (strain Massachusetts / E88).